A 577-amino-acid polypeptide reads, in one-letter code: Arginine--tRNA ligase (577 aa).

The 'HIGH' region signature appears at 122-132 (PNVAKEMHVGH).

It belongs to the class-I aminoacyl-tRNA synthetase family. In terms of assembly, monomer.

Its subcellular location is the cytoplasm. The enzyme catalyses tRNA(Arg) + L-arginine + ATP = L-arginyl-tRNA(Arg) + AMP + diphosphate. The sequence is that of Arginine--tRNA ligase (argS) from Salmonella typhimurium (strain SL1344).